A 218-amino-acid chain; its full sequence is MFENEKRMAAMEALKFVRNDMRIGIGTGSTAYYFIEGLSELVKNGLRITGIPTSKKSEELCRSFNIPVDYNIKDIDIDFDGADEFDPYGNLIKGGGGALVREKIVAYNSREFYVLVDHSKYSERLHKFPLPVEVLPFMSEKTLENIERLGCRASFRDDKKFISDNGNYIIDCVFSYTDPELESQIKMIPGVVEVGIFRHLSTKIFQGTIDGCRIIDVK.

Residues 27 to 30, 80 to 83, and 93 to 96 each bind substrate; these read TGST, DGAD, and KGGG. Glutamate 102 functions as the Proton acceptor in the catalytic mechanism. Lysine 120 is a binding site for substrate.

The protein belongs to the ribose 5-phosphate isomerase family. In terms of assembly, homodimer.

The catalysed reaction is aldehydo-D-ribose 5-phosphate = D-ribulose 5-phosphate. It participates in carbohydrate degradation; pentose phosphate pathway; D-ribose 5-phosphate from D-ribulose 5-phosphate (non-oxidative stage): step 1/1. Catalyzes the reversible conversion of ribose-5-phosphate to ribulose 5-phosphate. This chain is Ribose-5-phosphate isomerase A, found in Picrophilus torridus (strain ATCC 700027 / DSM 9790 / JCM 10055 / NBRC 100828 / KAW 2/3).